Reading from the N-terminus, the 215-residue chain is Protein Ac34 (215 aa).

In terms of assembly, interacts with host proteins P40, P34 ands P20.

Its subcellular location is the host nucleus. Functionally, plays a role in the translocation of the P40 subunit of host Arp2/3 to the nucleus. The robust nuclear accumulation of Arp2/3 induces nuclear actin polymerization to assist in virus replication. Mechanistically, subverts the host CRM1-dependent nuclear export pathway leading to Arp2/3 acumulation in the host nucleus. This chain is Protein Ac34 (Ac34), found in Autographa californica nuclear polyhedrosis virus (AcMNPV).